The chain runs to 335 residues: Endo-1,4-beta-xylanase S20 (335 aa).

The N-terminal stretch at 1 to 22 (MLRKLVTGALAAALLLSGQSNA) is a signal peptide. A GH11 domain is found at 39–241 (NNKNETGNGN…GSGYVDFTYA (203 aa)). 2 N-linked (GlcNAc...) asparagine glycosylation sites follow: N42 and N78. The active-site Nucleophile is E134. N-linked (GlcNAc...) asparagine glycosylation is present at N202. E228 functions as the Proton donor in the catalytic mechanism. A glycan (N-linked (GlcNAc...) asparagine) is linked at N251. The disordered stretch occupies residues 251–291 (NASAPSNNNNNNNNNNDNNGNWNNWNNNNNNNNNNNNNNNN). Positions 257-291 (NNNNNNNNNNDNNGNWNNWNNNNNNNNNNNNNNNN) are enriched in low complexity. The region spanning 300-335 (NCAAIWGQCGGSGYNGPKCCKQGSCKQINQWYSQCQ) is the CBM1 domain.

The protein belongs to the glycosyl hydrolase 11 (cellulase G) family.

Its subcellular location is the secreted. The catalysed reaction is Endohydrolysis of (1-&gt;4)-beta-D-xylosidic linkages in xylans.. It participates in glycan degradation; xylan degradation. Endo-1,4-beta-xylanase involved in the hydrolysis of xylan, a major structural heterogeneous polysaccharide found in plant biomass representing the second most abundant polysaccharide in the biosphere, after cellulose. The sequence is that of Endo-1,4-beta-xylanase S20 (xynS20) from Neocallimastix patriciarum (Rumen fungus).